Consider the following 337-residue polypeptide: Glycerol-3-phosphate dehydrogenase [NAD(P)+] (337 aa).

NADPH is bound by residues Trp-12 and Lys-107. Sn-glycerol 3-phosphate contacts are provided by Lys-107, Gly-138, and Thr-140. Ala-142 contacts NADPH. Positions 193, 246, 256, 257, and 258 each coordinate sn-glycerol 3-phosphate. Residue Lys-193 is the Proton acceptor of the active site. Residue Arg-257 participates in NADPH binding. Val-282 and Glu-284 together coordinate NADPH.

Belongs to the NAD-dependent glycerol-3-phosphate dehydrogenase family.

The protein localises to the cytoplasm. It carries out the reaction sn-glycerol 3-phosphate + NAD(+) = dihydroxyacetone phosphate + NADH + H(+). The enzyme catalyses sn-glycerol 3-phosphate + NADP(+) = dihydroxyacetone phosphate + NADPH + H(+). It participates in membrane lipid metabolism; glycerophospholipid metabolism. In terms of biological role, catalyzes the reduction of the glycolytic intermediate dihydroxyacetone phosphate (DHAP) to sn-glycerol 3-phosphate (G3P), the key precursor for phospholipid synthesis. The sequence is that of Glycerol-3-phosphate dehydrogenase [NAD(P)+] from Koribacter versatilis (strain Ellin345).